Here is a 502-residue protein sequence, read N- to C-terminus: UPF0371 protein CLL_A2797 (502 aa).

Belongs to the UPF0371 family.

The sequence is that of UPF0371 protein CLL_A2797 from Clostridium botulinum (strain Eklund 17B / Type B).